A 202-amino-acid chain; its full sequence is Superoxide dismutase [Mn/Fe] (202 aa).

Residues His-27, His-81, Asp-163, and His-167 each coordinate Fe(3+). His-27, His-81, Asp-163, and His-167 together coordinate Mn(2+).

This sequence belongs to the iron/manganese superoxide dismutase family. Mn(2+) serves as cofactor. It depends on Fe(3+) as a cofactor.

It catalyses the reaction 2 superoxide + 2 H(+) = H2O2 + O2. Destroys superoxide anion radicals which are normally produced within the cells and which are toxic to biological systems. Catalyzes the dismutation of superoxide anion radicals into O2 and H2O2 by successive reduction and oxidation of the transition metal ion at the active site. In Streptococcus agalactiae serotype V (strain ATCC BAA-611 / 2603 V/R), this protein is Superoxide dismutase [Mn/Fe] (sodA).